We begin with the raw amino-acid sequence, 481 residues long: Proline--tRNA ligase (481 aa).

Belongs to the class-II aminoacyl-tRNA synthetase family. ProS type 3 subfamily. Homodimer.

It localises to the cytoplasm. The enzyme catalyses tRNA(Pro) + L-proline + ATP = L-prolyl-tRNA(Pro) + AMP + diphosphate. Catalyzes the attachment of proline to tRNA(Pro) in a two-step reaction: proline is first activated by ATP to form Pro-AMP and then transferred to the acceptor end of tRNA(Pro). The sequence is that of Proline--tRNA ligase from Chlorobium limicola (strain DSM 245 / NBRC 103803 / 6330).